The sequence spans 107 residues: Translation initiation factor IF-1, chloroplastic (107 aa).

Residues 8–83 (REKKNPREAK…SKGRIIYRLP (76 aa)) form the S1-like domain.

Belongs to the IF-1 family. As to quaternary structure, component of the 30S ribosomal translation pre-initiation complex which assembles on the 30S ribosome in the order IF-2 and IF-3, IF-1 and N-formylmethionyl-tRNA(fMet); mRNA recruitment can occur at any time during PIC assembly.

The protein localises to the plastid. Its subcellular location is the chloroplast. Functionally, one of the essential components for the initiation of protein synthesis. Stabilizes the binding of IF-2 and IF-3 on the 30S subunit to which N-formylmethionyl-tRNA(fMet) subsequently binds. Helps modulate mRNA selection, yielding the 30S pre-initiation complex (PIC). Upon addition of the 50S ribosomal subunit IF-1, IF-2 and IF-3 are released leaving the mature 70S translation initiation complex. The chain is Translation initiation factor IF-1, chloroplastic from Lolium perenne (Perennial ryegrass).